The following is a 973-amino-acid chain: MTSTHHSRRSRETPQPEMSIGRYTRLDEIGRGSFATVYQGVHTKTRTYVAIKSVNLSKLNKKLKDNLSSEIHILKGLYHPHIVALIDCHETTSHIHLVMEYCALGDLSLFIKRRDTLGDHRYTRDMIAKYPNPPGGALNEVVVRHFLKQLASALKFLRDRNLIHRDIKPQNLLLCPSPSSYRSGVTQVVPFKGSEDSFNPATGLESLPLLKIADFGFARSLPATSLAETLCGSPLYMAPEILRYEKYDAKADLWSVGTVLYEMVVGKPPFRATNHVELLRKIEKGEDRIKFPEENPASDEIKALIRALLKRNPVERLNFPDFFQNGVITSPIPGLVADDLPSIPQGPPADPETAEATPRPDSRSGATVPGGTEREREGPSLPKGDTGLTQRPPSQNQRFGTPQTTTPMRRIGSGDRPPSTPKESTPPMTYPQRPSAVSHATAPGRQELVDRNATFTAMERQKGRNTFSEGSPQIDRQADKLREERERAAQDVAFERDYVVVEKRAVEVNAFADELAHSPRIQGNISRGAQTGALSRRSTVHGPTPSNPSPPQATVGKAMQVLSGRSRADSMHNRQGSYERRYGQSPTSATSAISKALNMASGRLFGMGFSPPLAITKGGRSPPLAYNPFPAYPAHGSLMIGDGAKSNLALDEDTKTVQILEECATRSDVVYGFAEVKYKQLVPLAPSVQTDPSSKLNLAGERENPDSADGGLTVDAIVTLSEEALVLYVKALSLLAKSMDIAGAWWARKNRGDGFGDSAMSRANGASTLAGTRINNVVQWIRNRFNEVLEKGEFVRLKLIEAQKRLPPDHPSHPDNHSVGSSLGSGASVDVVVSPGVSAEKLMYDRALEMSRTAAINELTGEDLSGCEIAYVTAIRMLEAVLENGEVPRFGQDKDDTSKDSDKIVLDAVQADERQVVIKLLTIQAVVASIRSRLAALRKKLAILAKRAPTPSANVPSKMASSNPVSVGATPPK.

The 306-residue stretch at 23 to 328 (YTRLDEIGRG…FPDFFQNGVI (306 aa)) folds into the Protein kinase domain. ATP-binding positions include 29–37 (IGRGSFATV) and K52. Residue D166 is the Proton acceptor of the active site. Disordered regions lie at residues 338–446 (DDLP…PGRQ), 460–482 (RQKG…DKLR), 523–587 (GNIS…QSPT), and 949–973 (PTPS…TPPK). Residues 387–407 (GLTQRPPSQNQRFGTPQTTTP) are compositionally biased toward polar residues. The segment covering 523–537 (GNISRGAQTGALSRR) has biased composition (polar residues). Residues 566-582 (SRADSMHNRQGSYERRY) show a composition bias toward basic and acidic residues. The span at 951–965 (PSANVPSKMASSNPV) shows a compositional bias: polar residues.

The protein belongs to the protein kinase superfamily. Ser/Thr protein kinase family. APG1/unc-51/ULK1 subfamily. As to quaternary structure, homodimer. Forms a ternary complex with ATG13 and ATG17.

It localises to the cytoplasm. It is found in the preautophagosomal structure membrane. It catalyses the reaction L-seryl-[protein] + ATP = O-phospho-L-seryl-[protein] + ADP + H(+). It carries out the reaction L-threonyl-[protein] + ATP = O-phospho-L-threonyl-[protein] + ADP + H(+). Functionally, serine/threonine protein kinase involved in the cytoplasm to vacuole transport (Cvt) and found to be essential in autophagy, where it is required for the formation of autophagosomes. Involved in the clearance of protein aggregates which cannot be efficiently cleared by the proteasome. Required for selective autophagic degradation of the nucleus (nucleophagy) as well as for mitophagy which contributes to regulate mitochondrial quantity and quality by eliminating the mitochondria to a basal level to fulfill cellular energy requirements and preventing excess ROS production. Also involved in endoplasmic reticulum-specific autophagic process, in selective removal of ER-associated degradation (ERAD) substrates. Plays a key role in ATG9 and ATG23 cycling through the pre-autophagosomal structure and is necessary to promote ATG18 binding to ATG9 through phosphorylation of ATG9. Catalyzes phosphorylation of ATG4, decreasing the interaction between ATG4 and ATG8 and impairing deconjugation of PE-conjugated forms of ATG8. The chain is Serine/threonine-protein kinase atg1 from Aspergillus fumigatus (strain ATCC MYA-4609 / CBS 101355 / FGSC A1100 / Af293) (Neosartorya fumigata).